The primary structure comprises 211 residues: Imidazole glycerol phosphate synthase subunit HisH (211 aa).

The region spanning 3–211 is the Glutamine amidotransferase type-1 domain; it reads VVAVIDYEMG…VSQVREKIAA (209 aa). Residue Cys-81 is the Nucleophile of the active site. Residues His-186 and Glu-188 contribute to the active site.

In terms of assembly, heterodimer of HisH and HisF.

Its subcellular location is the cytoplasm. The enzyme catalyses 5-[(5-phospho-1-deoxy-D-ribulos-1-ylimino)methylamino]-1-(5-phospho-beta-D-ribosyl)imidazole-4-carboxamide + L-glutamine = D-erythro-1-(imidazol-4-yl)glycerol 3-phosphate + 5-amino-1-(5-phospho-beta-D-ribosyl)imidazole-4-carboxamide + L-glutamate + H(+). It carries out the reaction L-glutamine + H2O = L-glutamate + NH4(+). It functions in the pathway amino-acid biosynthesis; L-histidine biosynthesis; L-histidine from 5-phospho-alpha-D-ribose 1-diphosphate: step 5/9. IGPS catalyzes the conversion of PRFAR and glutamine to IGP, AICAR and glutamate. The HisH subunit catalyzes the hydrolysis of glutamine to glutamate and ammonia as part of the synthesis of IGP and AICAR. The resulting ammonia molecule is channeled to the active site of HisF. This is Imidazole glycerol phosphate synthase subunit HisH from Nostoc sp. (strain PCC 7120 / SAG 25.82 / UTEX 2576).